A 315-amino-acid polypeptide reads, in one-letter code: Ankyrin repeat domain-containing protein SOWAHD (315 aa).

The segment at 1 to 39 is disordered; sequence MAQLGGAANRAPTASLAPTSQSLRCAPQPRPSRADTGSL. ANK repeat units lie at residues 112 to 141, 147 to 162, and 186 to 216; these read PREH…ELLL, TGYS…GRHE, and GGLT…DATR.

The protein belongs to the SOWAH family.

The sequence is that of Ankyrin repeat domain-containing protein SOWAHD (SOWAHD) from Homo sapiens (Human).